Consider the following 492-residue polypeptide: Glutamyl-tRNA(Gln) amidotransferase subunit A (492 aa).

Catalysis depends on charge relay system residues K80 and S155. The active-site Acyl-ester intermediate is the S179.

This sequence belongs to the amidase family. GatA subfamily. In terms of assembly, heterotrimer of A, B and C subunits.

It carries out the reaction L-glutamyl-tRNA(Gln) + L-glutamine + ATP + H2O = L-glutaminyl-tRNA(Gln) + L-glutamate + ADP + phosphate + H(+). In terms of biological role, allows the formation of correctly charged Gln-tRNA(Gln) through the transamidation of misacylated Glu-tRNA(Gln) in organisms which lack glutaminyl-tRNA synthetase. The reaction takes place in the presence of glutamine and ATP through an activated gamma-phospho-Glu-tRNA(Gln). This is Glutamyl-tRNA(Gln) amidotransferase subunit A from Mycobacteroides abscessus (strain ATCC 19977 / DSM 44196 / CCUG 20993 / CIP 104536 / JCM 13569 / NCTC 13031 / TMC 1543 / L948) (Mycobacterium abscessus).